The following is a 260-amino-acid chain: 3'-5' ssDNA/RNA exonuclease TatD (260 aa).

A divalent metal cation contacts are provided by Glu91, His127, and His152.

The protein belongs to the metallo-dependent hydrolases superfamily. TatD-type hydrolase family. TatD subfamily. In terms of assembly, monomer. It depends on Mg(2+) as a cofactor.

It is found in the cytoplasm. 3'-5' exonuclease that prefers single-stranded DNA and RNA. May play a role in the H(2)O(2)-induced DNA damage repair. This is 3'-5' ssDNA/RNA exonuclease TatD from Shigella flexneri serotype 5b (strain 8401).